We begin with the raw amino-acid sequence, 366 residues long: Phosphate acyltransferase (366 aa).

Positions 334–366 are disordered; the sequence is ESAKNKETQSKQASTKNTAPKTSETTKESQQSL. Polar residues predominate over residues 343 to 366; that stretch reads SKQASTKNTAPKTSETTKESQQSL.

Belongs to the PlsX family. Homodimer. Probably interacts with PlsY.

The protein localises to the cytoplasm. It catalyses the reaction a fatty acyl-[ACP] + phosphate = an acyl phosphate + holo-[ACP]. The protein operates within lipid metabolism; phospholipid metabolism. In terms of biological role, catalyzes the reversible formation of acyl-phosphate (acyl-PO(4)) from acyl-[acyl-carrier-protein] (acyl-ACP). This enzyme utilizes acyl-ACP as fatty acyl donor, but not acyl-CoA. This Onion yellows phytoplasma (strain OY-M) protein is Phosphate acyltransferase.